Consider the following 112-residue polypeptide: Nitrogen regulatory protein P-II (112 aa).

Position 51 is an O-UMP-tyrosine (tyrosine 51).

The protein belongs to the P(II) protein family. As to quaternary structure, homotrimer. Uridylylated/deuridylylated by GlnD.

P-II indirectly controls the transcription of the glutamine synthetase gene (GlnA). P-II prevents NR-II-catalyzed conversion of NR-I to NR-I-phosphate, the transcriptional activator of GlnA. When P-II is uridylylated to P-II-UMP, these events are reversed. When the ratio of Gln to 2-ketoglutarate decreases, P-II is uridylylated to P-II-UMP, which causes the deadenylation of glutamine synthetase by GlnE, so activating the enzyme. In Haemophilus influenzae (strain ATCC 51907 / DSM 11121 / KW20 / Rd), this protein is Nitrogen regulatory protein P-II (glnB).